Consider the following 646-residue polypeptide: Autophagy-related protein 28 (646 aa).

Disordered stretches follow at residues 1–148 and 221–245; these read MSSP…HVDN and PTRSTPDGNVIPVRQPVSNKPRGLK. Over residues 12–21 the composition is skewed to polar residues; the sequence is SPRQRLSNPL. The segment covering 63–75 has biased composition (low complexity); sequence SATSTRRSSSPAS. Polar residues predominate over residues 106–122; the sequence is MMMNQHPSRQSTVSSHG. 2 coiled-coil regions span residues 283 to 350 and 485 to 514; these read LDKM…MEDV and QQAAMQSQLSEMDDVVQELQKRLQLAESKH. Disordered regions lie at residues 475–494 and 546–612; these read SQAGDADEEPQQAAMQSQLS and AAAV…RGSA. 2 stretches are compositionally biased toward basic and acidic residues: residues 557–575 and 588–597; these read STDKAEGTSQEERADSHDE and RMEDHDHDPP.

This sequence belongs to the ATG28 family.

It localises to the cytoplasm. Its subcellular location is the vacuole membrane. The protein localises to the cytoplasmic vesicle membrane. Functionally, required for the autophagic degradation of peroxisomes called pexophagy, but not essential for general autophagy. Involved in resistance to elevated pH. In Gibberella zeae (strain ATCC MYA-4620 / CBS 123657 / FGSC 9075 / NRRL 31084 / PH-1) (Wheat head blight fungus), this protein is Autophagy-related protein 28.